The sequence spans 587 residues: Zinc finger protein 69 (587 aa).

A disordered region spans residues 42–128; it reads NGTQQESLAD…TPGTTAAGSQ (87 aa). Residues 76-147 form the KRAB domain; it reads HDEATPGTPA…VDLSQEEWGQ (72 aa). 9 consecutive C2H2-type zinc fingers follow at residues 271-293, 299-321, 327-349, 355-377, 383-405, 411-433, 439-461, 467-489, and 495-517; these read HKKK…ILEQ, KPAR…CMRA, NVCE…HTGE, KECG…HTGE, EECG…HTGE, DKCQ…HSGE, SECG…HTGE, TSCC…HTGE, and KECG…HTGV. Positions 564–587 are disordered; that stretch reads SRHQKIHRRNTFRDDPGHENKRQL. Residues 574–587 are compositionally biased toward basic and acidic residues; it reads TFRDDPGHENKRQL.

This sequence belongs to the krueppel C2H2-type zinc-finger protein family.

Its subcellular location is the nucleus. Its function is as follows. Putative transcription factor that appears to regulate lipid metabolism. The sequence is that of Zinc finger protein 69 from Mus musculus (Mouse).